A 241-amino-acid chain; its full sequence is DNA repair protein RecO (241 aa).

It belongs to the RecO family.

Functionally, involved in DNA repair and RecF pathway recombination. The chain is DNA repair protein RecO from Vibrio cholerae serotype O1 (strain ATCC 39541 / Classical Ogawa 395 / O395).